The sequence spans 317 residues: Putative HTH-type transcriptional regulatory protein Mlab_0160 (317 aa).

Residues 132–189 (LRTLREEQAMSLGDLAHALGVSRRTISKYEGGMGTTLEMAMRLEEFFNDDIVMPIDLL) form the HTH cro/C1-type domain. A DNA-binding region (H-T-H motif) is located at residues 143–162 (LGDLAHALGVSRRTISKYEG). The interval 199–219 (VPASLASGHNPESDAQPKRPE) is disordered. The segment covering 209–219 (PESDAQPKRPE) has biased composition (basic and acidic residues).

The polypeptide is Putative HTH-type transcriptional regulatory protein Mlab_0160 (Methanocorpusculum labreanum (strain ATCC 43576 / DSM 4855 / Z)).